The following is a 142-amino-acid chain: Large ribosomal subunit protein uL13 (142 aa).

This sequence belongs to the universal ribosomal protein uL13 family. In terms of assembly, part of the 50S ribosomal subunit.

This protein is one of the early assembly proteins of the 50S ribosomal subunit, although it is not seen to bind rRNA by itself. It is important during the early stages of 50S assembly. The polypeptide is Large ribosomal subunit protein uL13 (Vibrio cholerae serotype O1 (strain M66-2)).